The primary structure comprises 99 residues: METLSFEFPAGQPPRGRALVGCVGSGDLEVLIEPGLAGRLTINVQTSVNGAEQRWQHLFARMFDGTTPPAMAIDIHDFGATPGVVRLRLEQGFEEIGHD.

Ser25 is modified (O-(phosphoribosyl dephospho-coenzyme A)serine).

Belongs to the MdcC family. In terms of processing, covalently binds the prosthetic group of malonate decarboxylase.

Its subcellular location is the cytoplasm. In terms of biological role, subunit of malonate decarboxylase, it is an acyl carrier protein to which acetyl and malonyl thioester residues are bound via a 2'-(5''-phosphoribosyl)-3'-dephospho-CoA prosthetic group and turn over during the catalytic mechanism. The polypeptide is Malonate decarboxylase acyl carrier protein (Pseudomonas fluorescens (strain Pf0-1)).